Here is an 898-residue protein sequence, read N- to C-terminus: Cilium assembly protein DZIP1 (898 aa).

Positions 14–66 are disordered; sequence DPPGTHSSAGIPSLLSSPQSQPSSGSQSRPAPSTMSGPLTSSGASTSIPPPFK. Over residues 25 to 46 the composition is skewed to low complexity; the sequence is PSLLSSPQSQPSSGSQSRPAPS. Positions 47–60 are enriched in polar residues; it reads TMSGPLTSSGASTS. The stretch at 145-197 forms a coiled coil; the sequence is LSISLQAAEERLLAEAREREQICVQLQKKTQDAKALKEELKQRKKIIASQQAM. The C2H2-type zinc-finger motif lies at 207 to 230; the sequence is HKCQHCEKAFMNASFLQSHMQRRH. Coiled-coil stretches lie at residues 242–353 and 407–447; these read NQKK…VQTQ and SAVS…ISSK. Over residues 435-463 the composition is skewed to polar residues; it reads TSQNKQMKQISSKPPTITVQREGVSTPSP. Disordered regions lie at residues 435–509, 585–739, and 773–878; these read TSQN…SWQK, EQRV…WTDG, and KSLE…DAGT. Over residues 495–505 the composition is skewed to low complexity; the sequence is SSISESPTENR. Residues 573–590 are a coiled coil; the sequence is YRRALKEISHKLEQRVKE. Residues 605–652 are compositionally biased toward polar residues; it reads VVQSRPRSSSFPSTVTRVMSGPASKQQRTPQPVPRSRTNVPHKTSTPL. The span at 662 to 684 shows a compositional bias: acidic residues; the sequence is SDEDSSEEEEEEEEEEESSDEES. Composition is skewed to polar residues over residues 685-715 and 723-734; these read PQMQ…QSVR and AEPTNVTTLSDS. Residues 797–815 show a composition bias toward basic and acidic residues; sequence KPTDVRNTRQNAKKELKYS. Residues 816–826 show a composition bias toward acidic residues; sequence DDDDDDDDDWD. The span at 855 to 866 shows a compositional bias: polar residues; that stretch reads DTSTSVWGSSTG.

The protein belongs to the DZIP C2H2-type zinc-finger protein family. As to expression, expressed throughout the embryo starting at 12 hours.

Its subcellular location is the cell projection. It is found in the cilium. The protein resides in the cytoplasm. The protein localises to the cytoskeleton. It localises to the cilium basal body. Its subcellular location is the microtubule organizing center. It is found in the centrosome. The protein resides in the centriole. The protein localises to the nucleus. In terms of biological role, molecular adapter that recruits protein complexes required for cilium assembly and function to the cilium basal body. Required for establishment of left-right asymmetry during embryogenesis. Acts as a permissive factor that is required for the proper regulation of Hedgehog (Hh) target genes in response to Hh signals. Acts downstream of the Smoothened protein to modulate Gli activity in the somites of the developing embryo. The chain is Cilium assembly protein DZIP1 (dzip1) from Danio rerio (Zebrafish).